A 426-amino-acid polypeptide reads, in one-letter code: Serine hydroxymethyltransferase (426 aa).

(6S)-5,6,7,8-tetrahydrofolate is bound by residues L113 and 117–119 (GHL). At K222 the chain carries N6-(pyridoxal phosphate)lysine. 363–365 (SAF) serves as a coordination point for (6S)-5,6,7,8-tetrahydrofolate.

This sequence belongs to the SHMT family. As to quaternary structure, homodimer. It depends on pyridoxal 5'-phosphate as a cofactor.

The protein localises to the cytoplasm. The catalysed reaction is (6R)-5,10-methylene-5,6,7,8-tetrahydrofolate + glycine + H2O = (6S)-5,6,7,8-tetrahydrofolate + L-serine. It participates in one-carbon metabolism; tetrahydrofolate interconversion. Its pathway is amino-acid biosynthesis; glycine biosynthesis; glycine from L-serine: step 1/1. Catalyzes the reversible interconversion of serine and glycine with tetrahydrofolate (THF) serving as the one-carbon carrier. This reaction serves as the major source of one-carbon groups required for the biosynthesis of purines, thymidylate, methionine, and other important biomolecules. Also exhibits THF-independent aldolase activity toward beta-hydroxyamino acids, producing glycine and aldehydes, via a retro-aldol mechanism. In Bacteroides fragilis (strain ATCC 25285 / DSM 2151 / CCUG 4856 / JCM 11019 / LMG 10263 / NCTC 9343 / Onslow / VPI 2553 / EN-2), this protein is Serine hydroxymethyltransferase.